The sequence spans 174 residues: FMN reductase (NADH) RutF (174 aa).

Belongs to the non-flavoprotein flavin reductase family. RutF subfamily.

It carries out the reaction FMNH2 + NAD(+) = FMN + NADH + 2 H(+). In terms of biological role, catalyzes the reduction of FMN to FMNH2 which is used to reduce pyrimidine by RutA via the Rut pathway. The sequence is that of FMN reductase (NADH) RutF from Stutzerimonas stutzeri (strain A1501) (Pseudomonas stutzeri).